A 576-amino-acid polypeptide reads, in one-letter code: Low-affinity glucose transporter HXT4 (576 aa).

Residues 1–56 (MSEEAAYQEDTAVQNTPADALSPVESDSNSALSTPSNKAERDDMKDFDENHEESNN) are disordered. Residues 1 to 66 (MSEEAAYQED…YVEIPKKPAS (66 aa)) are Cytoplasmic-facing. Polar residues predominate over residues 25–37 (ESDSNSALSTPSN). Positions 38–54 (KAERDDMKDFDENHEES) are enriched in basic and acidic residues. K45 is covalently cross-linked (Glycyl lysine isopeptide (Lys-Gly) (interchain with G-Cter in ubiquitin)). Residues 67–87 (AYVTVSICCLMVAFGGFVFGW) traverse the membrane as a helical segment. Topologically, residues 88–122 (DTGTISGFVAQTDFIRRFGMKHHDGTYYLSKVRTG) are extracellular. Residues 123–143 (LMVSIINIGCAIGGIILAKLG) traverse the membrane as a helical segment. Residues 144-149 (DMYGRK) are Cytoplasmic-facing. Residues 150–170 (MGLIVVVVIYIIGIIIQIASI) form a helical membrane-spanning segment. Residues 171-180 (NKWYQYFIGR) lie on the Extracellular side of the membrane. The chain crosses the membrane as a helical span at residues 181–201 (IISGLGVGGIAVLSPMLISEV). At 202-207 (SPKHIR) the chain is on the cytoplasmic side. The helical transmembrane segment at 208–228 (GTLVSCYQLMITLGIFLGYCT) threads the bilayer. Residues 229-242 (NYGTKTYTNSVQWR) lie on the Extracellular side of the membrane. The helical transmembrane segment at 243-263 (VPLGLGFAWALFMIGGMTFVP) threads the bilayer. Topologically, residues 264–346 (ESPRYLVEVG…IQSLQQLTGD (83 aa)) are cytoplasmic. A helical transmembrane segment spans residues 347 to 363 (NYFFYYGTTVFTAVGLS). Residues 364-369 (DSFETS) lie on the Extracellular side of the membrane. The helical transmembrane segment at 370 to 387 (IVLGIVNFASTFVGIFLV) threads the bilayer. At 388 to 394 (ERYGRRR) the chain is on the cytoplasmic side. A helical transmembrane segment spans residues 395 to 415 (CLLWGAASMTACMVVFASVGV). Residues 416 to 437 (TRLWPNGKKNGSSKGAGNCMIV) lie on the Extracellular side of the membrane. The N-linked (GlcNAc...) asparagine glycan is linked to N425. The chain crosses the membrane as a helical span at residues 438 to 458 (FTCFYLFCFATTWAPIPFVVN). Topologically, residues 459 to 475 (SETFPLRVKSKCMAIAQ) are cytoplasmic. The helical transmembrane segment at 476 to 496 (ACNWIWGFLIGFFTPFISNAI) threads the bilayer. Position 497 (D497) is a topological domain, extracellular. The helical transmembrane segment at 498–518 (FYYGYVFMGCLVFSYFYVFFF) threads the bilayer. Residues 519-576 (VPETKGLTLEEVNTLWEEGVLPWKSPSWVPPNKRGTDYNADDLMHDDQPFYKKMFGKK) lie on the Cytoplasmic side of the membrane.

It belongs to the major facilitator superfamily. Sugar transporter (TC 2.A.1.1) family.

Its subcellular location is the cell membrane. Its activity is regulated as follows. Xylose uptake is strongly inhibited by glucose. In terms of biological role, low-affinity glucose transporter. Can also transport xylose. The polypeptide is Low-affinity glucose transporter HXT4 (HXT4) (Saccharomyces cerevisiae (strain JAY291) (Baker's yeast)).